The primary structure comprises 326 residues: Protein MICROTUBULE BINDING PROTEIN 2C (326 aa).

Composition is skewed to polar residues over residues 1-15 (MYEQQQHFMDLQSDS) and 34-46 (PHQSAAGTNSGNE). Disordered stretches follow at residues 1–46 (MYEQ…SGNE) and 71–132 (ERSS…KALA). The stretch at 132 to 183 (AGAEKEEMSRLREQVNDLQTKLSEKEEVLKSMEMSKNQVNEIQEKLEATNRL) forms a coiled coil.

Belongs to the microtubule binding protein 2C family. As to quaternary structure, interacts with STM. In terms of tissue distribution, expressed in seedlings, roots, flowers and developing ovules.

It localises to the cytoplasm. Its subcellular location is the cytoskeleton. Functionally, prevents homeodomain proteins (e.g. STM) association to plasmodesmata and, consequently, cell-to-cell transport. Binds to RNA. Alters STM RNA binding capacity. Regulates cytoskeleton (e.g. actin) organization that determinates cell shape. Regulates stomata patterning and drought tolerance. Involved in restricting tobamovirus (e.g. oilseed rape mosaic virus) infectivity, probably by interfering with cell-to-cell virus movement. This is Protein MICROTUBULE BINDING PROTEIN 2C from Arabidopsis thaliana (Mouse-ear cress).